The following is a 96-amino-acid chain: Aspartyl/glutamyl-tRNA(Asn/Gln) amidotransferase subunit C (96 aa).

The protein belongs to the GatC family. Heterotrimer of A, B and C subunits.

The catalysed reaction is L-glutamyl-tRNA(Gln) + L-glutamine + ATP + H2O = L-glutaminyl-tRNA(Gln) + L-glutamate + ADP + phosphate + H(+). It catalyses the reaction L-aspartyl-tRNA(Asn) + L-glutamine + ATP + H2O = L-asparaginyl-tRNA(Asn) + L-glutamate + ADP + phosphate + 2 H(+). Functionally, allows the formation of correctly charged Asn-tRNA(Asn) or Gln-tRNA(Gln) through the transamidation of misacylated Asp-tRNA(Asn) or Glu-tRNA(Gln) in organisms which lack either or both of asparaginyl-tRNA or glutaminyl-tRNA synthetases. The reaction takes place in the presence of glutamine and ATP through an activated phospho-Asp-tRNA(Asn) or phospho-Glu-tRNA(Gln). This is Aspartyl/glutamyl-tRNA(Asn/Gln) amidotransferase subunit C from Leptospira interrogans serogroup Icterohaemorrhagiae serovar copenhageni (strain Fiocruz L1-130).